Here is a 330-residue protein sequence, read N- to C-terminus: Low-redox potential peroxidase (330 aa).

The first 24 residues, 1-24, serve as a signal peptide directing secretion; that stretch reads MRSSTHIFVSFVVYCGVFVTSAIA. N-linked (GlcNAc...) asparagine glycosylation occurs at Asn-27. Cystine bridges form between Cys-34–Cys-285, Cys-54–Cys-123, and Cys-251–Cys-314. Ca(2+)-binding residues include Gly-69, Asp-71, and Ser-73. His-178 is a binding site for heme b. Ca(2+) contacts are provided by Ser-179, Asp-196, Thr-198, and Asp-203.

It belongs to the peroxidase family. Ligninase subfamily. Requires Ca(2+) as cofactor. Heme b is required as a cofactor.

Its subcellular location is the secreted. It catalyses the reaction 2 a phenolic donor + H2O2 = 2 a phenolic radical donor + 2 H2O. In terms of biological role, can oxidize the lignin redox mediator veratryl alcohol to veratryl aldehyde. May be involved in oxidation of lignocellulose substrates. The protein is Low-redox potential peroxidase (LnP) of Taiwanofungus camphoratus (Poroid brown-rot fungus).